An 88-amino-acid polypeptide reads, in one-letter code: Guanine nucleotide-binding protein subunit gamma (88 aa).

A lipid anchor (S-palmitoyl cysteine) is attached at Cys-84. Residue Cys-85 is modified to Cysteine methyl ester. A lipid anchor (S-farnesyl cysteine) is attached at Cys-85. The propeptide at 86–88 (TIM) is removed in mature form.

It belongs to the G protein gamma family. G proteins are composed of 3 units, alpha, beta and gamma.

It is found in the membrane. In Candida glabrata (strain ATCC 2001 / BCRC 20586 / JCM 3761 / NBRC 0622 / NRRL Y-65 / CBS 138) (Yeast), this protein is Guanine nucleotide-binding protein subunit gamma.